A 457-amino-acid polypeptide reads, in one-letter code: Siroheme synthase (457 aa).

The segment at 1 to 204 (MDHLPIFCQL…ADEKAVNATT (204 aa)) is precorrin-2 dehydrogenase /sirohydrochlorin ferrochelatase. Residues 22 to 23 (DV) and 43 to 44 (LT) contribute to the NAD(+) site. Ser128 carries the phosphoserine modification. The segment at 216 to 457 (GEVVLVGAGP…RDKLNWFSNY (242 aa)) is uroporphyrinogen-III C-methyltransferase. Pro225 is a binding site for S-adenosyl-L-methionine. Asp248 serves as the catalytic Proton acceptor. Lys270 (proton donor) is an active-site residue. S-adenosyl-L-methionine-binding positions include 301-303 (GGD), Ile306, 331-332 (TA), Met382, and Gly411.

This sequence in the N-terminal section; belongs to the precorrin-2 dehydrogenase / sirohydrochlorin ferrochelatase family. In the C-terminal section; belongs to the precorrin methyltransferase family.

The enzyme catalyses uroporphyrinogen III + 2 S-adenosyl-L-methionine = precorrin-2 + 2 S-adenosyl-L-homocysteine + H(+). It catalyses the reaction precorrin-2 + NAD(+) = sirohydrochlorin + NADH + 2 H(+). It carries out the reaction siroheme + 2 H(+) = sirohydrochlorin + Fe(2+). It functions in the pathway cofactor biosynthesis; adenosylcobalamin biosynthesis; precorrin-2 from uroporphyrinogen III: step 1/1. The protein operates within cofactor biosynthesis; adenosylcobalamin biosynthesis; sirohydrochlorin from precorrin-2: step 1/1. It participates in porphyrin-containing compound metabolism; siroheme biosynthesis; precorrin-2 from uroporphyrinogen III: step 1/1. Its pathway is porphyrin-containing compound metabolism; siroheme biosynthesis; siroheme from sirohydrochlorin: step 1/1. It functions in the pathway porphyrin-containing compound metabolism; siroheme biosynthesis; sirohydrochlorin from precorrin-2: step 1/1. Its function is as follows. Multifunctional enzyme that catalyzes the SAM-dependent methylations of uroporphyrinogen III at position C-2 and C-7 to form precorrin-2 via precorrin-1. Then it catalyzes the NAD-dependent ring dehydrogenation of precorrin-2 to yield sirohydrochlorin. Finally, it catalyzes the ferrochelation of sirohydrochlorin to yield siroheme. This is Siroheme synthase from Salmonella heidelberg (strain SL476).